The chain runs to 214 residues: Large ribosomal subunit protein uL16 (214 aa).

Arg-32 carries the post-translational modification Citrulline. Lys-175 participates in a covalent cross-link: Glycyl lysine isopeptide (Lys-Gly) (interchain with G-Cter in SUMO2). A Glycyl lysine isopeptide (Lys-Gly) (interchain with G-Cter in ubiquitin) cross-link involves residue Lys-188.

This sequence belongs to the universal ribosomal protein uL16 family. Component of the large ribosomal subunit. Mature ribosomes consist of a small (40S) and a large (60S) subunit. The 40S subunit contains about 33 different proteins and 1 molecule of RNA (18S). The 60S subunit contains about 49 different proteins and 3 molecules of RNA (28S, 5.8S and 5S). In terms of processing, citrullinated by PADI4. Ufmylated by UFL1.

The protein resides in the cytoplasm. Component of the large ribosomal subunit. Plays a role in the formation of actively translating ribosomes. May play a role in the embryonic brain development. The chain is Large ribosomal subunit protein uL16 from Homo sapiens (Human).